Here is a 110-residue protein sequence, read N- to C-terminus: Cuticle protein 13 (110 aa).

This chain is Cuticle protein 13, found in Limulus polyphemus (Atlantic horseshoe crab).